A 191-amino-acid chain; its full sequence is Pyridoxal 5'-phosphate synthase subunit PdxT (191 aa).

46-48 (GES) is an L-glutamine binding site. Cys78 serves as the catalytic Nucleophile. Residues Arg105 and 134 to 135 (IR) each bind L-glutamine. Active-site charge relay system residues include His170 and Glu172.

The protein belongs to the glutaminase PdxT/SNO family. In terms of assembly, in the presence of PdxS, forms a dodecamer of heterodimers. Only shows activity in the heterodimer.

The catalysed reaction is aldehydo-D-ribose 5-phosphate + D-glyceraldehyde 3-phosphate + L-glutamine = pyridoxal 5'-phosphate + L-glutamate + phosphate + 3 H2O + H(+). It catalyses the reaction L-glutamine + H2O = L-glutamate + NH4(+). It participates in cofactor biosynthesis; pyridoxal 5'-phosphate biosynthesis. Catalyzes the hydrolysis of glutamine to glutamate and ammonia as part of the biosynthesis of pyridoxal 5'-phosphate. The resulting ammonia molecule is channeled to the active site of PdxS. The sequence is that of Pyridoxal 5'-phosphate synthase subunit PdxT from Carboxydothermus hydrogenoformans (strain ATCC BAA-161 / DSM 6008 / Z-2901).